The primary structure comprises 632 residues: Tail spike protein (632 aa).

Residues 505 to 630 (SDARCKTEPL…KRMQEALAAL (126 aa)) form the Peptidase S74 domain.

As to quaternary structure, homotrimer. Post-translationally, proteolytic cleavage and release of the chaperone in the host cytosol stabilizes the folded protein. The cleavage gives rise to the mature tail spike protein but is not essential for catalytic activity.

It localises to the virion. In terms of biological role, functions as a receptor binding protein (RBP) and probably mediates the attachment to the host capsular exopolysaccharides. Displays a depolymerase activity that specifically degrades the K5-type polysaccharides of Escherichia coli capsule. Its function is as follows. The C-terminal chaperone protein mediates homotrimerization and proper folding of the catalytic trimer. This is Tail spike protein (kflA) from Escherichia virus K5 (Bacteriophage K5).